Reading from the N-terminus, the 189-residue chain is Putative L,D-transpeptidase in ATP synthase subunits region ORF 5 (189 aa).

Positions 1–35 (MTDTLNRRAAMALGLASAAGAALATPALSQDAAPA) form a signal peptide, tat-type signal. The region spanning 59-189 (PMLVADTFSR…CPVGTRVRVI (131 aa)) is the L,D-TPase catalytic domain. His149 acts as the Proton donor/acceptor in catalysis. The active-site Nucleophile is Cys165.

Belongs to the YkuD family. Post-translationally, predicted to be exported by the Tat system. The position of the signal peptide cleavage has not been experimentally proven.

It participates in cell wall biogenesis; peptidoglycan biosynthesis. The polypeptide is Putative L,D-transpeptidase in ATP synthase subunits region ORF 5 (Fuscovulum blasticum (Rhodobacter blasticus)).